The chain runs to 305 residues: Exosome complex component RRP45 (305 aa).

It belongs to the RNase PH family. As to quaternary structure, component of the RNA exosome complex. Specifically part of the catalytically inactive RNA exosome core complex (Exo-9) which may associate with the catalytic subunits RRP6 and DIS3 in cytoplasmic- and nuclear-specific RNA exosome complex forms. Exo-9 is formed by a hexameric base ring of RNase PH domain-containing subunits and a cap ring consisting of CSL4, RRP4 and RRP40. Interacts with LRP1.

The protein localises to the cytoplasm. It is found in the nucleus. The protein resides in the nucleolus. Non-catalytic component of the RNA exosome complex which has 3'-&gt;5' exoribonuclease activity and participates in a multitude of cellular RNA processing and degradation events. In the nucleus, the RNA exosome complex is involved in proper maturation of stable RNA species such as rRNA, snRNA and snoRNA, in the elimination of RNA processing by-products and non-coding 'pervasive' transcripts, such as antisense RNA species and cryptic unstable transcripts (CUTs), and of mRNAs with processing defects, thereby limiting or excluding their export to the cytoplasm. In the cytoplasm, the RNA exosome complex is involved in general mRNA turnover and in RNA surveillance pathways, preventing translation of aberrant mRNAs. The catalytic inactive RNA exosome core complex of 9 subunits (Exo-9) is proposed to play a pivotal role in the binding and presentation of RNA for ribonucleolysis, and to serve as a scaffold for the association with catalytic subunits and accessory proteins or complexes. RRP45 is part of the hexameric ring of RNase PH domain-containing subunits proposed to form a central channel which threads RNA substrates for degradation. The sequence is that of Exosome complex component RRP45 (RRP45) from Saccharomyces cerevisiae (strain ATCC 204508 / S288c) (Baker's yeast).